The following is a 223-amino-acid chain: NAD(P)H-hydrate epimerase (223 aa).

Residues 9-211 form the YjeF N-terminal domain; that stretch reads AIKLDEELMG…ELKDKLHLIL (203 aa). 60–64 provides a ligand contact to (6S)-NADPHX; the sequence is NNGGD. 2 residues coordinate K(+): Asn-61 and Asp-120. Residues 124–130 and Asp-153 contribute to the (6S)-NADPHX site; that span reads GFSFKGP. Position 156 (Ser-156) interacts with K(+).

Belongs to the NnrE/AIBP family. Requires K(+) as cofactor.

It catalyses the reaction (6R)-NADHX = (6S)-NADHX. It carries out the reaction (6R)-NADPHX = (6S)-NADPHX. Catalyzes the epimerization of the S- and R-forms of NAD(P)HX, a damaged form of NAD(P)H that is a result of enzymatic or heat-dependent hydration. This is a prerequisite for the S-specific NAD(P)H-hydrate dehydratase to allow the repair of both epimers of NAD(P)HX. In Entamoeba histolytica (strain ATCC 30459 / HM-1:IMSS / ABRM), this protein is NAD(P)H-hydrate epimerase.